The chain runs to 238 residues: MSKQRPYVKFKQFQEQTGIFFRNEKLLIQAFTHSSYVNEHRKRLHEDNERLEFLGDAVLELTVSQYLFEQFPQMSEGELTKMRAAIVCEPSLVTFAHALSFGDLVLLGKGEELTGGRMRPSLLADVFEAFIGALYLDQGIEAVVQFLGKTIFPKIREGAFSHVMDYKSQLQEFVQRDGSGVLEYKILQERGPAHNKEFVSRVSLNGEELGVGVGRSKKEAEQRAAQMALAKLKQLQQG.

The 130-residue stretch at Phe-10 to Gly-139 folds into the RNase III domain. Glu-52 serves as a coordination point for Mg(2+). The active site involves Asp-56. The Mg(2+) site is built by Asp-125 and Glu-128. Glu-128 is a catalytic residue. One can recognise a DRBM domain in the interval Asp-165 to Gln-234.

This sequence belongs to the ribonuclease III family. Homodimer. Mg(2+) serves as cofactor.

It localises to the cytoplasm. The catalysed reaction is Endonucleolytic cleavage to 5'-phosphomonoester.. Its function is as follows. Digests double-stranded RNA. Involved in the processing of primary rRNA transcript to yield the immediate precursors to the large and small rRNAs (23S and 16S). Processes some mRNAs, and tRNAs when they are encoded in the rRNA operon. Processes pre-crRNA and tracrRNA of type II CRISPR loci if present in the organism. The protein is Ribonuclease 3 of Anoxybacillus flavithermus (strain DSM 21510 / WK1).